We begin with the raw amino-acid sequence, 82 residues long: CLAVATA3/ESR (CLE)-related protein 53 (82 aa).

Positions 1 to 26 (MATSTNSREFLIFICVLTLLVVRSEA) are cleaved as a signal peptide. Hydroxyproline is present on residues Pro-74 and Pro-77. A glycan (O-linked (Ara...) hydroxyproline) is linked at Pro-77.

This sequence belongs to the CLV3/ESR signal peptide family. Post-translationally, the O-glycosylation (arabinosylation) of the hydroxyproline Pro-77 enhances binding affinity of the CLE53p peptide for its receptor. In terms of tissue distribution, expressed in root vasculature.

Its subcellular location is the secreted. The protein localises to the extracellular space. In terms of biological role, signaling peptide involved in the regulation of root colonization by arbuscular mycorrhizal (AM) fungi. Moves from root to shoot to function with the receptor kinase SUNN, in a signaling pathway that repress strigolactone biosynthetic genes and strigolactone content in the roots, and consequently reduces the promotion of further colonization by AM fungi. The sequence is that of CLAVATA3/ESR (CLE)-related protein 53 from Medicago truncatula (Barrel medic).